A 381-amino-acid chain; its full sequence is 2-oxoglutarate-dependent dioxygenase FGSG_00048 (381 aa).

The protein belongs to the iron/ascorbate-dependent oxidoreductase family. Fe(2+) serves as cofactor.

It participates in mycotoxin biosynthesis. Its function is as follows. 2-oxoglutarate-dependent dioxygenase; part of the gene cluster that mediates the biosynthesis of gramillins A and B, bicyclic lipopeptides that induce cell death in maize leaves but not in wheat leaves. The nonribosomal peptide synthetase GRA1 incorporates respectively a glutamic adic (Glu), a leucine (Leu), a serine (Ser), a hydroxyglutamine (HOGln), a 2-amino decanoic acid, and 2 cysteins (CysB and CysA). The biosynthesis of 2-amino decanoic acid incorporated in gramillins could be initiated by a fatty acid synthase composed of the alpha and beta subunits FGSG_00036 and FGSG_11656. The cytochrome P450 monooxygenase FGSG_15680 could hydroxylate the fatty acid chain. Subsequent oxidation to the ketone by the oxidoreductase FGSG_00048 and transamination by aminotransferase FGSG_00049 could form 2-amino-decanoic acid. On the other hand, FGSG_15680 could also be responsible for the HO-modified glutamine at the gamma-position. Whether hydroxylation occurs on the fully assembled product or on the Gln residue prior to assembly into the gramillins requires further proof. The thioredoxin FGSG_00043 could also be required for the disulfide-bond formation between CysA and CysB. The specific involvement of the remaining proteins from the cluster is more difficult to discern, but could have broader regulatory (FGSG_00040 and FGSG_11657) or enzymatic functions (FGSG_00044 and FGSG_00045). The final C-domain of GRA1 does not possess the expected sequence of a termination CT domain, often implicated in macrocyclization and release of a cyclopeptidein fungal NRPs; and the thioesterase FGSG_00047 may act in concert with the terminal C-domain of GRA1 to catalyze the formation of the macrocyclic anhydride and release of the products. The chain is 2-oxoglutarate-dependent dioxygenase FGSG_00048 from Gibberella zeae (strain ATCC MYA-4620 / CBS 123657 / FGSC 9075 / NRRL 31084 / PH-1) (Wheat head blight fungus).